The sequence spans 323 residues: ADP-L-glycero-D-manno-heptose-6-epimerase (323 aa).

NADP(+) contacts are provided by residues 10 to 11, 31 to 32, K38, R53, 75 to 79, and N92; these read FI, DN, and MGACS. Y143 serves as the catalytic Proton acceptor. An NADP(+)-binding site is contributed by K147. N170 lines the substrate pocket. Positions 171 and 179 each coordinate NADP(+). The active-site Proton acceptor is the K179. Substrate is bound by residues D181, K188, 202–205, R216, and Y281; that span reads FRSC.

This sequence belongs to the NAD(P)-dependent epimerase/dehydratase family. HldD subfamily. In terms of assembly, homopentamer. The cofactor is NADP(+).

It carries out the reaction ADP-D-glycero-beta-D-manno-heptose = ADP-L-glycero-beta-D-manno-heptose. It participates in nucleotide-sugar biosynthesis; ADP-L-glycero-beta-D-manno-heptose biosynthesis; ADP-L-glycero-beta-D-manno-heptose from D-glycero-beta-D-manno-heptose 7-phosphate: step 4/4. Catalyzes the interconversion between ADP-D-glycero-beta-D-manno-heptose and ADP-L-glycero-beta-D-manno-heptose via an epimerization at carbon 6 of the heptose. The sequence is that of ADP-L-glycero-D-manno-heptose-6-epimerase from Nitratidesulfovibrio vulgaris (strain DP4) (Desulfovibrio vulgaris).